We begin with the raw amino-acid sequence, 1341 residues long: MVYSYTEKKRIRKDFGKRPQVLDIPYLLSIQIDSFQKFIKQDPEEPCGLEAAFRSVFPIKSYNGNAELQYIKYQLGEPTFDVKECQTRGATFSAPLRVRLCLIIYEREGLNNIIKNTKEQEVYMGEIPLMTNNGTFIINGIERVIVSQLHRSPGVFFDSDKGKTHSSGKVLYNARIIPYRGSWLDFEFDLKDNLFVRIDRRRKLPVTVILRALNYTTDQILNIFFNKVIYEIQNNTLYMHLIPERLRGETASFDIAVNGVIYVKKGRRIAAKHIRQLKKDKISKIEVPMDYIIGKVVIKDYFDKNTNIPIVTANTEISSDILHNLIRSGYESIETLFSNDLDYGNYISETLRIDATTNKFDALVEIYRVMRPGEPPTKEAAEYLFENLFFSEERYDLSSVGRMKFNRSLQRVQIEDLGTLKKDDIVDVIKKLIDIRNGKGEVDDIDHLGNRRIRSVGEMAENQFRIGLVRVERAVKERLSLGDLDVLTPQDLINAKPISAAVREFFTSSQLSQFMDQNNPLSEITHKRRISALGPGGLTRERAGFEVRDVHPTHYGRVCPIETPEGPNIGLINSLSVYARANKYGFLETPYRKVQNGVVSNDIHYLSAIEEGDFVIAQANTNLNSIGEFIDDLVTCRNKGESGLFKKDQVDYMDVSTQQIVSVAASLIPFLEHDDANRALMGANMQRQAVPVLCSEKPLVGTGMERAVAIDSGVTVVAKRGGVIKYVDASRIVIHVNKNETHTEESGIDIYQLTKYIRSNQNTCINQRPCVSLGELVEHGDVIADGPSTDLGELALGQNMRIAFMPWNGYNFEDSMLVSERVVQEDKFTSIHIQELTCVSRDTKLGPEEITADIPNVGETALSKLDESGIIYIGAEVIGGDILVGKVTPKGETQLTPEEKLLRAIFGEKASDVKDSSLRVPNGVCGTVIDVQIFTRDGINKDKRSLIIESEKLKQVKKDLSEELQIFESALFDRVCDVLMTSGIDKKKLFETSRNAWLDLVLSDPEKQYQLSQLTKQYFDLKRMFEKKLEIQHRKITQGDELAPGILKIVKVYLAVKRQIQPGDKMAGRHGNKGVISKINPIEDMPYDQHGIPVDIVLNPLGVPSRMNIGQILETHLGMAAKGIGDKINFMLQQHKEANQLRRFMQQAYNLGEGSRQHINLNSFSDIEILKLAKNLKKGMPIATPVFDGATEKEIKDLLKLSGLPSSGQITLFDGCTGEAFERQVTVGYMYMLKLNHLVDDKMHARSTGSYSLVTQQPLGGKAQFGGQRFGEMEVWALEAYGASYTLQEMLTVKSDDVNGRTKMYKNIVDGNHMMEPGMPESFNVLLKEIRSLAINIELED.

The protein belongs to the RNA polymerase beta chain family. As to quaternary structure, the RNAP catalytic core consists of 2 alpha, 1 beta, 1 beta' and 1 omega subunit. When a sigma factor is associated with the core the holoenzyme is formed, which can initiate transcription.

The enzyme catalyses RNA(n) + a ribonucleoside 5'-triphosphate = RNA(n+1) + diphosphate. In terms of biological role, DNA-dependent RNA polymerase catalyzes the transcription of DNA into RNA using the four ribonucleoside triphosphates as substrates. This chain is DNA-directed RNA polymerase subunit beta, found in Blochmanniella pennsylvanica (strain BPEN).